The sequence spans 348 residues: Autophagy-related protein 27 (348 aa).

The signal sequence occupies residues 1–20 (MYRPDLLAFLLPLLAAPVFS). Residues 21-274 (AETLDCGKIR…DDGGDNSSSH (254 aa)) lie on the Lumenal side of the membrane. The region spanning 24 to 255 (LDCGKIRADG…TWHTKYACEK (232 aa)) is the MRH domain. Intrachain disulfides connect Cys26–Cys69, Cys82–Cys89, and Cys175–Cys253. 2 N-linked (GlcNAc...) asparagine glycosylation sites follow: Asn61 and Asn84. Over residues 180–208 (EGTEGEWVSEEKYEKRADEKKDDDKKEDG) the composition is skewed to basic and acidic residues. The tract at residues 180 to 219 (EGTEGEWVSEEKYEKRADEKKDDDKKEDGGDKDEGESTLE) is disordered. Residues Asn226 and Asn270 are each glycosylated (N-linked (GlcNAc...) asparagine). The chain crosses the membrane as a helical span at residues 275 to 295 (WGFFTWFVLIAFLLIAGYLIF). The Cytoplasmic segment spans residues 296 to 348 (SSWINFTRYGARGWDLLPHSDTIRDIPYLLKDFIRRILNTVQGTGSRGGYSAV).

It belongs to the ATG27 family. As to quaternary structure, forms a complex with ATG9 and ATG23.

Its subcellular location is the cytoplasmic vesicle membrane. It is found in the golgi apparatus membrane. The protein resides in the mitochondrion membrane. It localises to the preautophagosomal structure membrane. Functionally, effector of VPS34 phosphatidylinositol 3-phosphate kinase signaling. Regulates the cytoplasm to vacuole transport (Cvt) vesicle formation. Plays a role in ATG protein retrieval from the pre-autophagosomal structure (PAS) and is especially required for autophagy-dependent cycling of ATG9. Autophagy is required for proper vegetative growth, asexual/sexual reproduction, and full virulence. Autophagy is particularly involved in the biosynthesis of deoxynivalenol (DON), an important virulence determinant. In Gibberella zeae (strain ATCC MYA-4620 / CBS 123657 / FGSC 9075 / NRRL 31084 / PH-1) (Wheat head blight fungus), this protein is Autophagy-related protein 27.